Reading from the N-terminus, the 127-residue chain is Small ribosomal subunit protein uS11 (127 aa).

This sequence belongs to the universal ribosomal protein uS11 family. As to quaternary structure, part of the 30S ribosomal subunit. Interacts with proteins S7 and S18. Binds to IF-3.

Its function is as follows. Located on the platform of the 30S subunit, it bridges several disparate RNA helices of the 16S rRNA. Forms part of the Shine-Dalgarno cleft in the 70S ribosome. In Streptococcus mutans serotype c (strain ATCC 700610 / UA159), this protein is Small ribosomal subunit protein uS11.